The primary structure comprises 348 residues: Nicotinate-nucleotide--dimethylbenzimidazole phosphoribosyltransferase (348 aa).

The active-site Proton acceptor is Glu316.

The protein belongs to the CobT family.

The enzyme catalyses 5,6-dimethylbenzimidazole + nicotinate beta-D-ribonucleotide = alpha-ribazole 5'-phosphate + nicotinate + H(+). It participates in nucleoside biosynthesis; alpha-ribazole biosynthesis; alpha-ribazole from 5,6-dimethylbenzimidazole: step 1/2. Functionally, catalyzes the synthesis of alpha-ribazole-5'-phosphate from nicotinate mononucleotide (NAMN) and 5,6-dimethylbenzimidazole (DMB). The sequence is that of Nicotinate-nucleotide--dimethylbenzimidazole phosphoribosyltransferase from Xanthomonas oryzae pv. oryzae (strain PXO99A).